Here is a 68-residue protein sequence, read N- to C-terminus: Protein SlyX homolog (68 aa).

Belongs to the SlyX family.

The protein is Protein SlyX homolog of Pseudomonas putida (strain ATCC 700007 / DSM 6899 / JCM 31910 / BCRC 17059 / LMG 24140 / F1).